The primary structure comprises 118 residues: Vitelline membrane protein Vm32E (118 aa).

Residues 1–17 (MKIVALTLVAFVALAGA) form the signal peptide. The VM domain occupies 36–75 (GYPAPPCPTNYLFSCQPNLAPAPCAQEAQAPAYGSAGAYT).

Belongs to the vitelline membrane family.

Its subcellular location is the secreted. In terms of biological role, major early eggshell protein. This Drosophila mauritiana (Fruit fly) protein is Vitelline membrane protein Vm32E.